Consider the following 693-residue polypeptide: Elongation factor G (693 aa).

The region spanning 8–282 (EKTRNIGIMA…AVIDYLPSPL (275 aa)) is the tr-type G domain. Residues 17–24 (AHIDAGKT), 81–85 (DTPGH), and 135–138 (NKMD) contribute to the GTP site.

Belongs to the TRAFAC class translation factor GTPase superfamily. Classic translation factor GTPase family. EF-G/EF-2 subfamily.

It is found in the cytoplasm. Its function is as follows. Catalyzes the GTP-dependent ribosomal translocation step during translation elongation. During this step, the ribosome changes from the pre-translocational (PRE) to the post-translocational (POST) state as the newly formed A-site-bound peptidyl-tRNA and P-site-bound deacylated tRNA move to the P and E sites, respectively. Catalyzes the coordinated movement of the two tRNA molecules, the mRNA and conformational changes in the ribosome. This Staphylococcus aureus (strain Newman) protein is Elongation factor G.